A 984-amino-acid polypeptide reads, in one-letter code: MRLLSFIYLVWLALLTGTPQVSATDNGKTSDVAWDKYSLSVKGERLFVFSGEFHYQRLPVPELWLDVFQKLRANGFNTISVYFFWSYHSASEDVFDFTTGAHDIQRLFDYAKQAGLYVIARAGPYCNAETSAGGFALWAANGQMGSERTSDEAYYKKWKPWILEVGKIIAANQITNGGPVILNQHENELQETTYDSNDTKVIYMEQVAKAFEEAGVVVPSSHNEKGMRTVSWSTDYKNVGGAVNVYGLDSYPGSLSCANPNSGFNLLRTYYQWFQNYSYTQPEYLAEFEGGWFQPWGGSFYDSCASELSPEFADVYYKNNIGSRVTLHNIYMTFGGTNWGHSAAPVVYTSYDYGSPLRETREIRDKLKQTKLLGLFTRVSKDLLKTYMEGNGTSYTSDDSIYTWALRNPDSDAGFYVVAHNTSSSREVTTFSLNITTSAGAMTIPDIELDGRQSKIIVTDYSIGSESSLLYSSAEVLTYATLDVDVLVFYLNAGQKGAFVFKDAPADLKYQTYGNSNLSALETSQGTQYSYTQGEGVTAVKFSNGVLVYLLDKETAWNFFAPPTVSSPTVAPNEHILVFGPYLVRGASIKHDTVEIVGDNSNSTSIEIYTGDEHVKKVSWNGNLIDTRATAYGSLIGTVPGAEDIEISLPSLSSWKAQDTLPEISPDYDDSRWTICNKTTSVNSVAPLSLPVLYSGDYGYHTGTKIYRGRFDGQNATGANVTVQNGVAAGWAAWLNGAYVGGFSGDPDKVASWEVLKFNHSSLRSRDNVLTIITDYTGHDQNSQKPIGTQNPRGIMGATLIGGGNFTLWRIQGNAGGEKNIDPVRGPMNEGGLYGERMGWHLPGYQVPESALDSSPLEGVSGAEGRFYTTSFQLDLEEDLDVPIGLQLSAPAGTEAVVQIFMNGYQFGHYLPHIGPQSLFPFPPGVIKNRGQNSLAISMWALTDAGARLEQVELKAYAKYRSGFDFNRDWTYLQPGWKDRTEYA.

The first 23 residues, 1 to 23 (MRLLSFIYLVWLALLTGTPQVSA), serve as a signal peptide directing secretion. Substrate-binding residues include Y82, N127, A128, E129, and N187. E188 functions as the Proton donor in the catalytic mechanism. N-linked (GlcNAc...) asparagine glycosylation occurs at N197. Position 251 (Y251) interacts with substrate. Cysteines 257 and 304 form a disulfide. An N-linked (GlcNAc...) asparagine glycan is attached at N276. The active-site Nucleophile is the E287. Y353 is a binding site for substrate. 10 N-linked (GlcNAc...) asparagine glycosylation sites follow: N391, N421, N434, N517, N602, N677, N715, N720, N759, and N805.

It belongs to the glycosyl hydrolase 35 family.

The protein localises to the secreted. The catalysed reaction is Hydrolysis of terminal non-reducing beta-D-galactose residues in beta-D-galactosides.. Its function is as follows. Cleaves beta-linked terminal galactosyl residues from gangliosides, glycoproteins, and glycosaminoglycans. The polypeptide is Probable beta-galactosidase C (lacC) (Aspergillus oryzae (strain ATCC 42149 / RIB 40) (Yellow koji mold)).